A 200-amino-acid chain; its full sequence is NADH-quinone oxidoreductase subunit C (200 aa).

The protein belongs to the complex I 30 kDa subunit family. In terms of assembly, NDH-1 is composed of 14 different subunits. Subunits NuoB, C, D, E, F, and G constitute the peripheral sector of the complex.

It localises to the cell inner membrane. The enzyme catalyses a quinone + NADH + 5 H(+)(in) = a quinol + NAD(+) + 4 H(+)(out). Its function is as follows. NDH-1 shuttles electrons from NADH, via FMN and iron-sulfur (Fe-S) centers, to quinones in the respiratory chain. The immediate electron acceptor for the enzyme in this species is believed to be ubiquinone. Couples the redox reaction to proton translocation (for every two electrons transferred, four hydrogen ions are translocated across the cytoplasmic membrane), and thus conserves the redox energy in a proton gradient. In Paraburkholderia xenovorans (strain LB400), this protein is NADH-quinone oxidoreductase subunit C.